The primary structure comprises 202 residues: LexA repressor (202 aa).

A DNA-binding region (H-T-H motif) is located at residues 28–48; it reads RAEIAQRLGFRSPNAAEEHLK. Active-site for autocatalytic cleavage activity residues include serine 119 and lysine 156.

Belongs to the peptidase S24 family. In terms of assembly, homodimer.

It catalyses the reaction Hydrolysis of Ala-|-Gly bond in repressor LexA.. Functionally, represses a number of genes involved in the response to DNA damage (SOS response), including recA and lexA. Binds to the 16 bp palindromic sequence 5'-CTGTATATATATACAG-3'. In the presence of single-stranded DNA, RecA interacts with LexA causing an autocatalytic cleavage which disrupts the DNA-binding part of LexA, leading to derepression of the SOS regulon and eventually DNA repair. This Yersinia enterocolitica serotype O:8 / biotype 1B (strain NCTC 13174 / 8081) protein is LexA repressor.